The following is a 767-amino-acid chain: Photosystem I P700 chlorophyll a apoprotein A1 (767 aa).

Positions 1 to 22 (MTISPPESGEKNKKVLEDPVKA) are disordered. Basic and acidic residues predominate over residues 8-22 (SGEKNKKVLEDPVKA). Transmembrane regions (helical) follow at residues 76–99 (IFSA…FHGA), 162–185 (LMAL…FHYH), 201–225 (LNHH…HIGA), 309–327 (VSHH…GHMY), 368–391 (RHAQ…HHMY), 407–433 (LGLF…IAMV), 455–477 (ALIS…LYIH), and 558–576 (LMIH…LILL). Residues C600 and C609 each coordinate [4Fe-4S] cluster. Helical transmembrane passes span 616–637 (HVFL…HFSW) and 681–703 (ISMY…MFLF). Residue H692 participates in divinylchlorophyll a' binding. Divinyl chlorophyll a is bound by residues M700 and Y708. W709 contacts phylloquinone. A helical membrane pass occupies residues 741–761 (AVGVTHFLVGGIATTWAFFHA).

It belongs to the PsaA/PsaB family. The PsaA/B heterodimer binds the P700 divinyl chlorophyll special pair and subsequent electron acceptors. PSI consists of a core antenna complex that captures photons, and an electron transfer chain that converts photonic excitation into a charge separation. The cyanobacterial PSI reaction center is composed of one copy each of PsaA,B,C,D,E,F,I,J,K,L,M and X, and forms trimeric complexes. PSI electron transfer chain: 5 divinyl chlorophyll a, 1 divinyl chlorophyll a', 2 phylloquinones and 3 4Fe-4S clusters. PSI core antenna: 90 divinyl chlorophyll a, 22 carotenoids, 3 phospholipids and 1 galactolipid. P700 is a divinyl chlorophyll a/divinyl chlorophyll a' dimer, A0 is one or more divinyl chlorophyll a, A1 is one or both phylloquinones and FX is a shared 4Fe-4S iron-sulfur center. serves as cofactor.

Its subcellular location is the cellular thylakoid membrane. The catalysed reaction is reduced [plastocyanin] + hnu + oxidized [2Fe-2S]-[ferredoxin] = oxidized [plastocyanin] + reduced [2Fe-2S]-[ferredoxin]. PsaA and PsaB bind P700, the primary electron donor of photosystem I (PSI), as well as the electron acceptors A0, A1 and FX. PSI is a plastocyanin/cytochrome c6-ferredoxin oxidoreductase, converting photonic excitation into a charge separation, which transfers an electron from the donor P700 chlorophyll pair to the spectroscopically characterized acceptors A0, A1, FX, FA and FB in turn. Oxidized P700 is reduced on the lumenal side of the thylakoid membrane by plastocyanin or cytochrome c6. The sequence is that of Photosystem I P700 chlorophyll a apoprotein A1 from Prochlorococcus marinus (strain AS9601).